The following is a 237-amino-acid chain: Demethylmenaquinone methyltransferase (237 aa).

Residues Thr-58, Asp-79, and 106–107 (NA) contribute to the S-adenosyl-L-methionine site.

Belongs to the class I-like SAM-binding methyltransferase superfamily. MenG/UbiE family.

The enzyme catalyses a 2-demethylmenaquinol + S-adenosyl-L-methionine = a menaquinol + S-adenosyl-L-homocysteine + H(+). Its pathway is quinol/quinone metabolism; menaquinone biosynthesis; menaquinol from 1,4-dihydroxy-2-naphthoate: step 2/2. Functionally, methyltransferase required for the conversion of demethylmenaquinol (DMKH2) to menaquinol (MKH2). This is Demethylmenaquinone methyltransferase from Bacillus anthracis (strain A0248).